A 225-amino-acid chain; its full sequence is Urease accessory protein UreF (225 aa).

The protein belongs to the UreF family. UreD, UreF and UreG form a complex that acts as a GTP-hydrolysis-dependent molecular chaperone, activating the urease apoprotein by helping to assemble the nickel containing metallocenter of UreC. The UreE protein probably delivers the nickel.

The protein resides in the cytoplasm. Its function is as follows. Required for maturation of urease via the functional incorporation of the urease nickel metallocenter. The protein is Urease accessory protein UreF of Arthrobacter sp. (strain FB24).